The primary structure comprises 1127 residues: Ras guanine nucleotide exchange factor F (1127 aa).

Disordered regions lie at residues 1–82 and 96–154; these read MTDK…SLLN and NSGG…SSSS. Low complexity-rich tracts occupy residues 23–53 and 67–82; these read NQPS…TTSP and NNNN…SLLN. The span at 122 to 132 shows a compositional bias: polar residues; the sequence is RTSTTLAQFSG. Over residues 133–154 the composition is skewed to low complexity; the sequence is SSLPNTENSSPPPSSSLISSSS. Kelch repeat units lie at residues 212–261, 262–311, 313–366, 367–418, and 420–469; these read GFYL…LYNN, SMYI…VESG, MIVF…MHKG, NMYV…LFQD, and IFIS…VKGN. The 33-residue stretch at 557-589 folds into the LisH domain; the sequence is SHQFVLQLIMEYLERNTYHKVIAAIQKESGVLH. An N-terminal Ras-GEF domain is found at 673-804; sequence NKVQIKAATF…KLRELKKKLQ (132 aa). In terms of domain architecture, Ras-GEF spans 835–1062; it reads DELEIARQMT…YDLNLLSESL (228 aa). Residues 1090–1127 form a disordered region; that stretch reads LGSARELNNSNRDSNNITGSSSNNNSNSSNSLSPIVKL. Over residues 1103–1127 the composition is skewed to low complexity; it reads SNNITGSSSNNNSNSSNSLSPIVKL.

Functionally, promotes the exchange of Ras-bound GDP by GTP. In Dictyostelium discoideum (Social amoeba), this protein is Ras guanine nucleotide exchange factor F (gefF).